The following is a 444-amino-acid chain: Tubulin beta-4A chain (444 aa).

The short motif at 1–4 is the MREI motif element; it reads MREI. GTP is bound by residues Gln11, Glu69, Ser138, Gly142, Thr143, and Gly144. Glu69 contacts Mg(2+). The residue at position 172 (Ser172) is a Phosphoserine; by CDK1. GTP is bound by residues Asn204 and Asn226. Position 436 is a 5-glutamyl polyglutamate (Glu436).

This sequence belongs to the tubulin family. As to quaternary structure, dimer of alpha and beta chains. A typical microtubule is a hollow water-filled tube with an outer diameter of 25 nm and an inner diameter of 15 nM. Alpha-beta heterodimers associate head-to-tail to form protofilaments running lengthwise along the microtubule wall with the beta-tubulin subunit facing the microtubule plus end conferring a structural polarity. Microtubules usually have 13 protofilaments but different protofilament numbers can be found in some organisms and specialized cells. It depends on Mg(2+) as a cofactor. Post-translationally, some glutamate residues at the C-terminus are polyglycylated, resulting in polyglycine chains on the gamma-carboxyl group. Glycylation is mainly limited to tubulin incorporated into axonemes (cilia and flagella) whereas glutamylation is prevalent in neuronal cells, centrioles, axonemes, and the mitotic spindle. Both modifications can coexist on the same protein on adjacent residues, and lowering polyglycylation levels increases polyglutamylation, and reciprocally. Cilia and flagella glycylation is required for their stability and maintenance. Flagella glycylation controls sperm motility. Some glutamate residues at the C-terminus are polyglutamylated, resulting in polyglutamate chains on the gamma-carboxyl group. Polyglutamylation plays a key role in microtubule severing by spastin (SPAST). SPAST preferentially recognizes and acts on microtubules decorated with short polyglutamate tails: severing activity by SPAST increases as the number of glutamates per tubulin rises from one to eight, but decreases beyond this glutamylation threshold. Glutamylation is also involved in cilia motility. In terms of processing, phosphorylated on Ser-172 by CDK1 during the cell cycle, from metaphase to telophase, but not in interphase. This phosphorylation inhibits tubulin incorporation into microtubules.

Its subcellular location is the cytoplasm. It localises to the cytoskeleton. Functionally, tubulin is the major constituent of microtubules, a cylinder consisting of laterally associated linear protofilaments composed of alpha- and beta-tubulin heterodimers. Microtubules grow by the addition of GTP-tubulin dimers to the microtubule end, where a stabilizing cap forms. Below the cap, tubulin dimers are in GDP-bound state, owing to GTPase activity of alpha-tubulin. In Bos taurus (Bovine), this protein is Tubulin beta-4A chain (TUBB4A).